The sequence spans 142 residues: Alpha-lactalbumin (142 aa).

The N-terminal stretch at 1–19 (MMSFVSLLLVGILFHATQA) is a signal peptide. Positions 20–142 (EQLTKCEVFR…KLDQWLCEKL (123 aa)) constitute a C-type lysozyme domain. 4 disulfide bridges follow: cysteine 25-cysteine 139, cysteine 47-cysteine 130, cysteine 80-cysteine 96, and cysteine 92-cysteine 110. N-linked (GlcNAc...) asparagine glycosylation is found at asparagine 64 and asparagine 93. The Ca(2+) site is built by lysine 98, aspartate 101, aspartate 103, aspartate 106, and aspartate 107.

The protein belongs to the glycosyl hydrolase 22 family. Lactose synthase (LS) is a heterodimer of a catalytic component, beta1,4-galactosyltransferase (beta4Gal-T1) and a regulatory component, alpha-lactalbumin (LA). In terms of tissue distribution, mammary gland specific. Secreted in milk.

The protein resides in the secreted. Functionally, regulatory subunit of lactose synthase, changes the substrate specificity of galactosyltransferase in the mammary gland making glucose a good acceptor substrate for this enzyme. This enables LS to synthesize lactose, the major carbohydrate component of milk. In other tissues, galactosyltransferase transfers galactose onto the N-acetylglucosamine of the oligosaccharide chains in glycoproteins. The polypeptide is Alpha-lactalbumin (LALBA) (Bos mutus grunniens (Wild yak)).